A 1756-amino-acid chain; its full sequence is RANBP2-like and GRIP domain-containing protein 2 (1756 aa).

Residue Ser21 is modified to Phosphoserine. TPR repeat units follow at residues 59-92, 583-616, and 647-680; these read PRAHRFLGLLYELEENTEKAVECYRRSLELNPPQ, QKMGRGLNSSYDQQEYIGRSVHYWKKVLPLLKII, and EDAHITFAILDAVHGNIEDAVTAFESIKSVVSYW. The interval 759-804 is disordered; that stretch reads GPLYKNGSLRNADSEIKHSTPSPTKYSLSPSKSYKYSPKTPPRWAE. Low complexity predominate over residues 777–796; it reads STPSPTKYSLSPSKSYKYSP. One can recognise a RanBD1 1 domain in the interval 1029–1165; it reads HFEPVVQMPE…FEECQRLLLD (137 aa). 2 disordered regions span residues 1206–1241 and 1299–1324; these read TKVTEEENKGSGTGAAGASDTTIKPNPENTGPTLEW and AKLNQSGTSVGTDEESDVTQEEERDG. A compositionally biased stretch (polar residues) spans 1228 to 1237; the sequence is IKPNPENTGP. Residues 1310–1322 show a composition bias toward acidic residues; that stretch reads TDEESDVTQEEER. The 137-residue stretch at 1326–1462 folds into the RanBD1 2 domain; the sequence is YFEPVVPLPD…FDEAKTAQEK (137 aa). The span at 1573–1586 shows a compositional bias: polar residues; sequence NDSETSSVAQSGSE. A disordered region spans residues 1573-1614; the sequence is NDSETSSVAQSGSESKVEPKKCELSKNSDIEQSSDSKVKNLS. Over residues 1587–1610 the composition is skewed to basic and acidic residues; it reads SKVEPKKCELSKNSDIEQSSDSKV. Positions 1693 to 1743 constitute a GRIP domain; it reads QEESAANVEHLKNVLLQFIFLKPGSERESLLPVINTMLQLSPEEKGKLAAV.

The polypeptide is RANBP2-like and GRIP domain-containing protein 2 (RGPD2) (Homo sapiens (Human)).